The chain runs to 131 residues: Actin-associated protein FAM107A (131 aa).

A coiled-coil region spans residues 57–77 (VLEHRRRNQLIKKKEEELEAK). Residues 61-71 (RRRNQLIKKKE) carry the Nuclear localization signal motif.

In terms of assembly, interacts with ACTB. Interacts with COMMD1; this interaction stabilizes COMMD1 in the nucleus. Interacts with MAP1A. Interacts with PRDX1. Interacts with F-actin.

The protein resides in the nucleus. The protein localises to the cytoplasm. Its subcellular location is the cytoskeleton. It is found in the stress fiber. It localises to the cell junction. The protein resides in the focal adhesion. The protein localises to the cell projection. Its subcellular location is the ruffle membrane. It is found in the synapse. In terms of biological role, stress-inducible actin-binding protein that plays a role in synaptic and cognitive functions by modulating actin filamentous (F-actin) dynamics. Mediates polymerization of globular actin to F-actin. Also binds to, stabilizes and bundles F-actin. Involved in synaptic function by regulating neurite outgrowth in an actin-dependent manner and for the acquisition of hippocampus-dependent cognitive function, such as learning and long-term memory. Plays a role in the actin and microtubule cytoskeleton organization; negatively regulates focal adhesion (FA) assembly promoting malignant glial cell migration in an actin-, microtubule- and MAP1A-dependent manner. Also involved in neuroblastoma G1/S phase cell cycle progression and cell proliferation inhibition by stimulating ubiquitination of NF-kappa-B subunit RELA and NF-kappa-B degradation in a COMMD1- and actin-dependent manner. May play a role in tumor development. The sequence is that of Actin-associated protein FAM107A from Rattus norvegicus (Rat).